We begin with the raw amino-acid sequence, 286 residues long: Phosphatidylserine decarboxylase proenzyme (286 aa).

Residues Asp90, His147, and Ser253 each act as charge relay system; for autoendoproteolytic cleavage activity in the active site. The Schiff-base intermediate with substrate; via pyruvic acid; for decarboxylase activity role is filled by Ser253. Pyruvic acid (Ser); by autocatalysis is present on Ser253.

The protein belongs to the phosphatidylserine decarboxylase family. PSD-B subfamily. Prokaryotic type I sub-subfamily. In terms of assembly, heterodimer of a large membrane-associated beta subunit and a small pyruvoyl-containing alpha subunit. Pyruvate serves as cofactor. Post-translationally, is synthesized initially as an inactive proenzyme. Formation of the active enzyme involves a self-maturation process in which the active site pyruvoyl group is generated from an internal serine residue via an autocatalytic post-translational modification. Two non-identical subunits are generated from the proenzyme in this reaction, and the pyruvate is formed at the N-terminus of the alpha chain, which is derived from the carboxyl end of the proenzyme. The autoendoproteolytic cleavage occurs by a canonical serine protease mechanism, in which the side chain hydroxyl group of the serine supplies its oxygen atom to form the C-terminus of the beta chain, while the remainder of the serine residue undergoes an oxidative deamination to produce ammonia and the pyruvoyl prosthetic group on the alpha chain. During this reaction, the Ser that is part of the protease active site of the proenzyme becomes the pyruvoyl prosthetic group, which constitutes an essential element of the active site of the mature decarboxylase.

Its subcellular location is the cell membrane. The enzyme catalyses a 1,2-diacyl-sn-glycero-3-phospho-L-serine + H(+) = a 1,2-diacyl-sn-glycero-3-phosphoethanolamine + CO2. The protein operates within phospholipid metabolism; phosphatidylethanolamine biosynthesis; phosphatidylethanolamine from CDP-diacylglycerol: step 2/2. Catalyzes the formation of phosphatidylethanolamine (PtdEtn) from phosphatidylserine (PtdSer). The sequence is that of Phosphatidylserine decarboxylase proenzyme from Pseudoalteromonas atlantica (strain T6c / ATCC BAA-1087).